Here is a 529-residue protein sequence, read N- to C-terminus: MQQRRPVRRALLSVSDKAGIIEFAQALSARGVELLSTGGTARLLAEKGLPVTEVSDYTGFPEMMDGRVKTLHPKVHGGILGRRGQDDAIMEQHHIAPIDMVVVNLYPFAETVAREGCSLEDAVENIDIGGPTMVRSAAKNHKDVAIVVKSSDYDAIIKEMDANEGSLTLDTRFDLAIKAFEHTAAYDSMIANYFGSMVPAYHGESKEAAGRFPRTLNLNFIKKQDMRYGENSHQQAAFYIEENVKEASVATAQQVQGKALSYNNIADTDAALECVKAFNEPACVIVKHANPCGVAVSTSILDAYDRAYKTDPTSAFGGIIAFNRELDAETAQAIISRQFVEVIIAPSATEEALKITAAKQNVRVLTCGQWAQRVPGLDFKRVNGGLLVQDRDLGMVSEAELRVVSKRQPTEQELRDALFCWKVAKFVKSNAIVYAKENMTIGIGAGQMSRVYSAKIAGIKAADEGLEVKGSAMASDAFFPFRDGIDAAAAVGVSCVIQPGGSIRDEEVIAAADEHGIAMIFTDMRHFRH.

In terms of domain architecture, MGS-like spans 1 to 148 (MQQRRPVRRA…KNHKDVAIVV (148 aa)).

Belongs to the PurH family.

It catalyses the reaction (6R)-10-formyltetrahydrofolate + 5-amino-1-(5-phospho-beta-D-ribosyl)imidazole-4-carboxamide = 5-formamido-1-(5-phospho-D-ribosyl)imidazole-4-carboxamide + (6S)-5,6,7,8-tetrahydrofolate. It carries out the reaction IMP + H2O = 5-formamido-1-(5-phospho-D-ribosyl)imidazole-4-carboxamide. The protein operates within purine metabolism; IMP biosynthesis via de novo pathway; 5-formamido-1-(5-phospho-D-ribosyl)imidazole-4-carboxamide from 5-amino-1-(5-phospho-D-ribosyl)imidazole-4-carboxamide (10-formyl THF route): step 1/1. It functions in the pathway purine metabolism; IMP biosynthesis via de novo pathway; IMP from 5-formamido-1-(5-phospho-D-ribosyl)imidazole-4-carboxamide: step 1/1. This is Bifunctional purine biosynthesis protein PurH from Salmonella agona (strain SL483).